Here is an 837-residue protein sequence, read N- to C-terminus: GRIP1-associated protein 1 (837 aa).

N-acetylalanine is present on Ala-2. Residues 4–158 are a coiled coil; the sequence is ALSEEEFQRM…ALQERYGKEA (155 aa). Disordered stretches follow at residues 161–180, 555–577, 647–666, and 677–702; these read PSAV…PISL, KGKE…ERDG, SEMN…VSSF, and SSAI…LSDE. Residues 204-637 adopt a coiled-coil conformation; that stretch reads EQLQGLESSK…LQEILTNSKS (434 aa). Residues 648 to 666 are compositionally biased toward polar residues; that stretch reads EMNSPSRTQTGDSSSVSSF. Residues Ser-651, Ser-662, Ser-664, Ser-665, Ser-684, Ser-686, Ser-687, and Ser-688 each carry the phosphoserine modification. A compositionally biased stretch (low complexity) spans 678–690; the sequence is SAIPARSLSSSPQ. Coiled-coil stretches lie at residues 697-731 and 781-810; these read AELS…LEVS and DENL…KDME. Ser-826 carries the post-translational modification Phosphoserine.

As to quaternary structure, interacts with GRIP1, GRIP2 and AMPA receptors. Interacts (via C-terminus) with MAPK8/JNK1 and with MAP3K1/MEKK1; the interaction promotes MAP3K1-mediated phosphorylation of MAPK8. Interacts (via N-terminus) with RAB4A (in GTP-bound form). Interacts (via C-terminus) with STX12. In terms of processing, proteolytically cleaved by caspase-3. A minor C-terminal proteolytic fragment of 30 kDa is produced. Proteolytic cleavage is required for JNK signaling activation. As to expression, expressed in the central nervous system; especially in neurons.

Its subcellular location is the early endosome membrane. The protein localises to the recycling endosome membrane. The protein resides in the cell projection. It is found in the axon. It localises to the dendrite. Its subcellular location is the synapse. Its function is as follows. Regulates the endosomal recycling back to the neuronal plasma membrane, possibly by connecting early and late recycling endosomal domains and promoting segregation of recycling endosomes from early endosomal membranes. Involved in the localization of recycling endosomes to dendritic spines, thereby playing a role in the maintenance of dendritic spine morphology. Required for the activity-induced AMPA receptor recycling to dendrite membranes and for long-term potentiation and synaptic plasticity. Functions as a scaffold protein in neurons to facilitate MAP3K1/MEKK1-mediated activation of the JNK1 kinase by phosphorylation, possibly by bringing MAP3K1/MEKK1 and JNK1 in close proximity. This is GRIP1-associated protein 1 (Gripap1) from Rattus norvegicus (Rat).